The chain runs to 317 residues: 4-hydroxy-3-methylbut-2-enyl diphosphate reductase (317 aa).

A [4Fe-4S] cluster-binding site is contributed by Cys12. (2E)-4-hydroxy-3-methylbut-2-enyl diphosphate is bound by residues His41 and His74. Dimethylallyl diphosphate-binding residues include His41 and His74. Isopentenyl diphosphate is bound by residues His41 and His74. Cys97 contacts [4Fe-4S] cluster. His125 lines the (2E)-4-hydroxy-3-methylbut-2-enyl diphosphate pocket. Position 125 (His125) interacts with dimethylallyl diphosphate. Residue His125 coordinates isopentenyl diphosphate. Glu127 acts as the Proton donor in catalysis. Thr168 serves as a coordination point for (2E)-4-hydroxy-3-methylbut-2-enyl diphosphate. Cys198 contacts [4Fe-4S] cluster. (2E)-4-hydroxy-3-methylbut-2-enyl diphosphate-binding residues include Ser226, Ser227, Asn228, and Ser270. Dimethylallyl diphosphate is bound by residues Ser226, Ser227, Asn228, and Ser270. 4 residues coordinate isopentenyl diphosphate: Ser226, Ser227, Asn228, and Ser270.

Belongs to the IspH family. In terms of assembly, homodimer. It depends on [4Fe-4S] cluster as a cofactor.

It carries out the reaction isopentenyl diphosphate + 2 oxidized [2Fe-2S]-[ferredoxin] + H2O = (2E)-4-hydroxy-3-methylbut-2-enyl diphosphate + 2 reduced [2Fe-2S]-[ferredoxin] + 2 H(+). It catalyses the reaction dimethylallyl diphosphate + 2 oxidized [2Fe-2S]-[ferredoxin] + H2O = (2E)-4-hydroxy-3-methylbut-2-enyl diphosphate + 2 reduced [2Fe-2S]-[ferredoxin] + 2 H(+). It participates in isoprenoid biosynthesis; dimethylallyl diphosphate biosynthesis; dimethylallyl diphosphate from (2E)-4-hydroxy-3-methylbutenyl diphosphate: step 1/1. It functions in the pathway isoprenoid biosynthesis; isopentenyl diphosphate biosynthesis via DXP pathway; isopentenyl diphosphate from 1-deoxy-D-xylulose 5-phosphate: step 6/6. Functionally, catalyzes the conversion of 1-hydroxy-2-methyl-2-(E)-butenyl 4-diphosphate (HMBPP) into a mixture of isopentenyl diphosphate (IPP) and dimethylallyl diphosphate (DMAPP). Acts in the terminal step of the DOXP/MEP pathway for isoprenoid precursor biosynthesis. This Proteus mirabilis (strain HI4320) protein is 4-hydroxy-3-methylbut-2-enyl diphosphate reductase.